The sequence spans 636 residues: DNA-dependent metalloprotease SPRTN (636 aa).

Residues 19-42 (QETPAAGWPDEDCPSSKRRRVDPS) are disordered. The region spanning 76 to 183 (RAMFLQFNDK…ASGTNITIYH (108 aa)) is the SprT-like domain. H141 provides a ligand contact to Zn(2+). E142 is an active-site residue. Zn(2+)-binding residues include H145 and H160. Disordered regions lie at residues 238–382 (TYTK…GKQR) and 398–430 (RGAS…PSGK). Positions 241 to 268 (KIKEPENYGKTGKSDKQRDKMPATEMPK) are enriched in basic and acidic residues. The span at 272–281 (PPSSTSSSGS) shows a compositional bias: low complexity. Residues 290 to 298 (FSGRGFVLG) carry the SHP-box motif. A compositionally biased stretch (polar residues) spans 302–311 (QIPTNKQIQS). A compositionally biased stretch (pro residues) spans 313–327 (PKAPPEPLHSPPDSP). A compositionally biased stretch (polar residues) spans 341–374 (RLSSGTSNIPRKRSVGNTNAFINVNGSPVRISNG). Residues 399 to 416 (GASAVGSSKSSTDASTAD) show a composition bias toward low complexity. The short motif at 451–458 (ESNISKYF) is the PIP-box element. The tract at residues 473-608 (TFGSPQKSAI…VRDQQANNPP (136 aa)) is disordered. 2 stretches are compositionally biased toward polar residues: residues 492-523 (FGSN…SGSS) and 545-554 (SPRTSGTTPS). Positions 535-566 (SNFPSPRNIGSPRTSGTTPSGAKKRSWEEHNS) match the Nuclear localization signal motif. Composition is skewed to basic and acidic residues over residues 559–570 (RSWEEHNSERVF) and 584–593 (TDKKREEVRS). Residues 612–636 (TVHCPVCHIRLPESTINDHLDSCLL) form a UBZ4-type zinc finger. The Zn(2+) site is built by C615, C618, H630, and C634.

The protein belongs to the Spartan family. In terms of assembly, homodimer. Zn(2+) is required as a cofactor. Autocatalytically cleaved in response to double-stranded DNA-binding: autocatalytic cleavage takes place in trans and leads to inactivation.

The protein resides in the nucleus. It localises to the chromosome. Its activity is regulated as follows. DNA-binding activates the protease activity: single-stranded DNA-binding specifically activates ability to cleave covalent DNA-protein cross-links (DPCs). In contrast, double-stranded DNA-binding specifically activates autocatalytic cleavage, and subsequent inactivation. In terms of biological role, DNA-dependent metalloendopeptidase that mediates the proteolytic cleavage of covalent DNA-protein cross-links (DPCs) during DNA synthesis, thereby playing a key role in maintaining genomic integrity. DPCs are highly toxic DNA lesions that interfere with essential chromatin transactions, such as replication and transcription, and which are induced by reactive agents, such as UV light or formaldehyde. Associates with the DNA replication machinery and specifically removes DPCs during DNA synthesis. Catalyzes proteolytic cleavage of the hmces DNA-protein cross-link following unfolding by the brip1/fancj helicase. Acts as a pleiotropic protease for DNA-binding proteins cross-linked with DNA, such as top1, top2a, histones H3 and H4. Mediates degradation of DPCs that are not ubiquitinated, while it is not able to degrade ubiquitinated DPCs. SPRTN activation requires polymerase collision with DPCs followed by helicase bypass of DPCs. May also act as a 'reader' of ubiquitinated pcna: facilitates chromatin association of rad18 and is required for efficient pcna monoubiquitination, promoting a feed-forward loop to enhance pcna ubiquitination and translesion DNA synthesis. Acts as a regulator of translesion DNA synthesis by recruiting vcp/p97 to sites of DNA damage. This Danio rerio (Zebrafish) protein is DNA-dependent metalloprotease SPRTN.